Consider the following 230-residue polypeptide: Aquaporin Z (230 aa).

Helical transmembrane passes span Ala-9 to Ala-29 and Ile-35 to Ile-55. Positions Asn-64–Ala-66 match the NPA 1 motif. Helical transmembrane passes span Leu-83–Ile-103, Leu-131–Gly-151, and Gly-160–Val-180. The short motif at Asn-186–Ala-188 is the NPA 2 element. A helical transmembrane segment spans residues Ala-194 to Ile-214.

This sequence belongs to the MIP/aquaporin (TC 1.A.8) family. Homotetramer.

The protein resides in the cell inner membrane. It catalyses the reaction H2O(in) = H2O(out). Channel that permits osmotically driven movement of water in both directions. It is involved in the osmoregulation and in the maintenance of cell turgor during volume expansion in rapidly growing cells. It mediates rapid entry or exit of water in response to abrupt changes in osmolarity. In Pseudomonas putida (strain ATCC 47054 / DSM 6125 / CFBP 8728 / NCIMB 11950 / KT2440), this protein is Aquaporin Z.